We begin with the raw amino-acid sequence, 40 residues long: Protein 4.1 (40 aa).

This Escherichia phage T7 (Bacteriophage T7) protein is Protein 4.1.